Reading from the N-terminus, the 655-residue chain is MPLKWKTSSPAIWKFPVPVLKTSRSTPLSPAYISLVEEEDQHMKLSLGGSEMGLSSHLQSSKAGPTRIFTSNTHSSVVLQGFDQLRLEGLLCDVTLMPGDTDDAFPVHRVMMASASDYFKAMFTGGMKEQDLMCIKLHGVSKVGLRKIIDFIYTAKLSLNMDNLQDTLEAASFLQILPVLDFCKVFLISGVTLDNCVEVGRIANTYNLTEVDKYVNSFVLKNFPALLSTGEFLKLPFERLAFVLSSNSLKHCTELELFKATCRWLRLEEPRMDFAAKLMKNIRFPLMTPQELINYVQTVDFMRTDNTCVNLLLEASNYQMMPYMQPVMQSDRTAIRSDTTHLVTLGGVLRQQLVVSKELRMYDEKAHEWKSLAPMDAPRYQHGIAVIGNFLYVVGGQSNYDTKGKTAVDTVFRFDPRYNKWMQVASLNEKRTFFHLSALKGYLYAVGGRNAAGELPTVECYNPRTNEWTYVAKMSEPHYGHAGTVYGGVMYISGGITHDTFQKELMCFDPDTDKWIQKAPMTTVRGLHCMCTVGERLYVIGGNHFRGTSDYDDVLSCEYYSPILDQWTPIAAMLRGQSDVGVAVFENKIYVVGGYSWNNRCMVEIVQKYDPDKDEWHKVFDLPESLGGIRACTLTVFPPEETTPSPSRESPLSAP.

The region spanning 92–161 (CDVTLMPGDT…IYTAKLSLNM (70 aa)) is the BTB domain. The BACK domain maps to 196–297 (CVEVGRIANT…TPQELINYVQ (102 aa)). Kelch repeat units follow at residues 341 to 389 (HLVT…VIGN), 390 to 441 (FLYV…ALKG), 442 to 488 (YLYA…VYGG), 490 to 535 (MYIS…TVGE), 537 to 587 (LYVI…VFEN), and 588 to 636 (KIYV…TLTV).

In terms of assembly, component of the BCR(KLHL9-KLHL13) E3 ubiquitin ligase complex, at least composed of CUL3, KLHL9, KLHL13 and RBX1. Interacts with AURKB.

It functions in the pathway protein modification; protein ubiquitination. Functionally, substrate-specific adapter of a BCR (BTB-CUL3-RBX1) E3 ubiquitin-protein ligase complex required for mitotic progression and cytokinesis. The BCR(KLHL9-KLHL13) E3 ubiquitin ligase complex mediates the ubiquitination of AURKB and controls the dynamic behavior of AURKB on mitotic chromosomes and thereby coordinates faithful mitotic progression and completion of cytokinesis. This chain is Kelch-like protein 13 (KLHL13), found in Homo sapiens (Human).